We begin with the raw amino-acid sequence, 121 residues long: Large ribosomal subunit protein bL19 (121 aa).

The protein belongs to the bacterial ribosomal protein bL19 family.

In terms of biological role, this protein is located at the 30S-50S ribosomal subunit interface and may play a role in the structure and function of the aminoacyl-tRNA binding site. This chain is Large ribosomal subunit protein bL19, found in Chlorobaculum tepidum (strain ATCC 49652 / DSM 12025 / NBRC 103806 / TLS) (Chlorobium tepidum).